The sequence spans 503 residues: Ribose import ATP-binding protein RbsA (503 aa).

ABC transporter domains are found at residues 10-246 and 256-500; these read LEVR…VGRD and VEPG…TGSE. 42-49 contacts ATP; the sequence is GENGAGKS.

It belongs to the ABC transporter superfamily. Ribose importer (TC 3.A.1.2.1) family. The complex is composed of an ATP-binding protein (RbsA), two transmembrane proteins (RbsC) and a solute-binding protein (RbsB).

It is found in the cell membrane. The catalysed reaction is D-ribose(out) + ATP + H2O = D-ribose(in) + ADP + phosphate + H(+). In terms of biological role, part of the ABC transporter complex RbsABC involved in ribose import. Responsible for energy coupling to the transport system. This chain is Ribose import ATP-binding protein RbsA, found in Rhodococcus jostii (strain RHA1).